Consider the following 327-residue polypeptide: RING-H2 finger protein ATL34 (327 aa).

The signal sequence occupies residues 1-26 (MTIGKSPILLHHHVIFLLLLVLQVSG). Residues 47–67 (AVIIAMLMFTLLFSMLACCVC) traverse the membrane as a helical segment. Residues 128 to 170 (CAICLNEFEDEETLRLMPPCSHAFHASCIDVWLSSRSTCPVCR) form an RING-type; atypical zinc finger. Residues 280 to 327 (LSHMKTLPQARSSREGYRSGSVGSERRGKGKEKEFGEGSFDRLKAEMV) form a disordered region. Basic and acidic residues predominate over residues 303-327 (SERRGKGKEKEFGEGSFDRLKAEMV).

It belongs to the RING-type zinc finger family. ATL subfamily.

The protein resides in the membrane. The catalysed reaction is S-ubiquitinyl-[E2 ubiquitin-conjugating enzyme]-L-cysteine + [acceptor protein]-L-lysine = [E2 ubiquitin-conjugating enzyme]-L-cysteine + N(6)-ubiquitinyl-[acceptor protein]-L-lysine.. It functions in the pathway protein modification; protein ubiquitination. The protein is RING-H2 finger protein ATL34 (ATL34) of Arabidopsis thaliana (Mouse-ear cress).